Reading from the N-terminus, the 294-residue chain is Probable porphobilinogen deaminase (294 aa).

The residue at position 233 (Cys-233) is an S-(dipyrrolylmethanemethyl)cysteine.

This sequence belongs to the HMBS family. The cofactor is dipyrromethane.

It catalyses the reaction 4 porphobilinogen + H2O = hydroxymethylbilane + 4 NH4(+). The protein operates within porphyrin-containing compound metabolism; protoporphyrin-IX biosynthesis; coproporphyrinogen-III from 5-aminolevulinate: step 2/4. In terms of biological role, tetrapolymerization of the monopyrrole PBG into the hydroxymethylbilane pre-uroporphyrinogen in several discrete steps. In Sulfurisphaera tokodaii (strain DSM 16993 / JCM 10545 / NBRC 100140 / 7) (Sulfolobus tokodaii), this protein is Probable porphobilinogen deaminase.